Consider the following 161-residue polypeptide: Protein OPG060 (161 aa).

This sequence belongs to the orthopoxvirus OPG058 family.

This is Protein OPG060 (OPG060) from Homo sapiens (Human).